A 252-amino-acid polypeptide reads, in one-letter code: Putative hydro-lyase OB3382 (252 aa).

Belongs to the D-glutamate cyclase family.

The sequence is that of Putative hydro-lyase OB3382 from Oceanobacillus iheyensis (strain DSM 14371 / CIP 107618 / JCM 11309 / KCTC 3954 / HTE831).